Consider the following 660-residue polypeptide: MKAVIFAYHDMGCQGVQAVLDAGYEIAAIFTHADNPAENTFFGSVSRQAAELGIPVYAPDNVNHPIWVDRIAELAPDIIFSFYYRNLLSEEILHLAPAGAFNLHGSLLPAYRGRAPLNWVLVNGESETGVTLHRMVKRADAGEIVASQRVAIAQDDVALTLHHKLCQAARQLLNSILPTMKCGDIPSVPQRESDSTYYGRRRPEDGLIDWHKPVSTVHNLVRAVAAPWPGAFSYNGSQKFTIWSSRMCPDAQGALPGSVISVSPLRVACADGALEIITGQAGDDITVQGSQLAQTLGLVAGARLNRPPATSGKRRIRVLILGVNGFIGNHLTERLLNEENYEVYGMDIGSNAISRFLLHPRFHFVEGDISIHSEWIEYHVKKCDVVLPLVAIATPIEYTRNPLRVFELDFEENLRIIRYCVKYRKRVVFPSTSEVYGMCTDASFDEDKSNLIVGPVNKPRWIYSVSKQLLDRVIWAYGEKEGLRFTLFRPFNWMGPRLDSLNAARIGSSRAITQLILNLVEGTPIKLIDGGQQKRCFTDIRDGIEALFRIIVNDGDRCDGKIINIGNPDNEASIQELATLLLDSFDKHPLRCHFPPFAGFQVVESRSYYGKGYQDVAHRKPSIDNARRCLGWEPSIAMRDTVEETLDFFLRSVDIAERAS.

The segment at 1–304 is formyltransferase ArnAFT; that stretch reads MKAVIFAYHD…TLGLVAGARL (304 aa). Catalysis depends on H104, which acts as the Proton donor; for formyltransferase activity. Residues R114 and 136–140 contribute to the (6R)-10-formyltetrahydrofolate site; that span reads VKRAD. Residues 314–660 are dehydrogenase ArnADH; that stretch reads RRIRVLILGV…RSVDIAERAS (347 aa). NAD(+)-binding positions include D347 and 368-369; that span reads DI. Residues A393, Y398, and 432 to 433 contribute to the UDP-alpha-D-glucuronate site; that span reads TS. E434 serves as the catalytic Proton acceptor; for decarboxylase activity. UDP-alpha-D-glucuronate is bound by residues R460, N492, 526–535, and Y613; that span reads KLIDGGQQKR. R619 functions as the Proton donor; for decarboxylase activity in the catalytic mechanism.

This sequence in the N-terminal section; belongs to the Fmt family. UDP-L-Ara4N formyltransferase subfamily. The protein in the C-terminal section; belongs to the NAD(P)-dependent epimerase/dehydratase family. UDP-glucuronic acid decarboxylase subfamily. As to quaternary structure, homohexamer, formed by a dimer of trimers.

The catalysed reaction is UDP-alpha-D-glucuronate + NAD(+) = UDP-beta-L-threo-pentopyranos-4-ulose + CO2 + NADH. It carries out the reaction UDP-4-amino-4-deoxy-beta-L-arabinose + (6R)-10-formyltetrahydrofolate = UDP-4-deoxy-4-formamido-beta-L-arabinose + (6S)-5,6,7,8-tetrahydrofolate + H(+). It functions in the pathway nucleotide-sugar biosynthesis; UDP-4-deoxy-4-formamido-beta-L-arabinose biosynthesis; UDP-4-deoxy-4-formamido-beta-L-arabinose from UDP-alpha-D-glucuronate: step 1/3. The protein operates within nucleotide-sugar biosynthesis; UDP-4-deoxy-4-formamido-beta-L-arabinose biosynthesis; UDP-4-deoxy-4-formamido-beta-L-arabinose from UDP-alpha-D-glucuronate: step 3/3. Its pathway is bacterial outer membrane biogenesis; lipopolysaccharide biosynthesis. In terms of biological role, bifunctional enzyme that catalyzes the oxidative decarboxylation of UDP-glucuronic acid (UDP-GlcUA) to UDP-4-keto-arabinose (UDP-Ara4O) and the addition of a formyl group to UDP-4-amino-4-deoxy-L-arabinose (UDP-L-Ara4N) to form UDP-L-4-formamido-arabinose (UDP-L-Ara4FN). The modified arabinose is attached to lipid A and is required for resistance to polymyxin and cationic antimicrobial peptides. This Salmonella typhimurium (strain LT2 / SGSC1412 / ATCC 700720) protein is Bifunctional polymyxin resistance protein ArnA (arnA).